The chain runs to 307 residues: UDP-3-O-acyl-N-acetylglucosamine deacetylase (307 aa).

3 residues coordinate Zn(2+): H78, H237, and D241. H264 (proton donor) is an active-site residue.

This sequence belongs to the LpxC family. Zn(2+) serves as cofactor.

It catalyses the reaction a UDP-3-O-[(3R)-3-hydroxyacyl]-N-acetyl-alpha-D-glucosamine + H2O = a UDP-3-O-[(3R)-3-hydroxyacyl]-alpha-D-glucosamine + acetate. Its pathway is glycolipid biosynthesis; lipid IV(A) biosynthesis; lipid IV(A) from (3R)-3-hydroxytetradecanoyl-[acyl-carrier-protein] and UDP-N-acetyl-alpha-D-glucosamine: step 2/6. Its function is as follows. Catalyzes the hydrolysis of UDP-3-O-myristoyl-N-acetylglucosamine to form UDP-3-O-myristoylglucosamine and acetate, the committed step in lipid A biosynthesis. This Azoarcus sp. (strain BH72) protein is UDP-3-O-acyl-N-acetylglucosamine deacetylase.